The sequence spans 290 residues: Pantothenate synthetase (290 aa).

30–37 (MGALHEGH) lines the ATP pocket. The active-site Proton donor is His37. Gln61 lines the (R)-pantoate pocket. Gln61 contributes to the beta-alanine binding site. Residue 147 to 150 (GEKD) participates in ATP binding. Gln153 provides a ligand contact to (R)-pantoate. ATP is bound by residues Val176 and 184-187 (KSSR).

Belongs to the pantothenate synthetase family. Homodimer.

The protein resides in the cytoplasm. The enzyme catalyses (R)-pantoate + beta-alanine + ATP = (R)-pantothenate + AMP + diphosphate + H(+). The protein operates within cofactor biosynthesis; (R)-pantothenate biosynthesis; (R)-pantothenate from (R)-pantoate and beta-alanine: step 1/1. Functionally, catalyzes the condensation of pantoate with beta-alanine in an ATP-dependent reaction via a pantoyl-adenylate intermediate. The protein is Pantothenate synthetase of Chlorobium chlorochromatii (strain CaD3).